The primary structure comprises 675 residues: Parasporal crystal protein Cry18Ba (675 aa).

This sequence belongs to the delta endotoxin family.

Binds to the brush border membrane vesicles of scarab larvae and damages the gut wall somehow to allow the vegetative cells of P.popilliae to enter the hemolymph. The sequence is that of Parasporal crystal protein Cry18Ba (cry18Ba) from Paenibacillus popilliae (Bacillus popilliae).